The chain runs to 430 residues: Type 3 secretion system ATPase (430 aa).

Position 162–167 (Gly162–Phe167) interacts with ATP.

The protein belongs to the ATPase alpha/beta chains family. T3SS ATPase subfamily. The core secretion machinery of the T3SS is composed of approximately 20 different proteins, including cytoplasmic components, a base, an export apparatus and a needle. This subunit is part of the cytosolic complex. Forms homohexamers. Interacts directly with MxiN/SctL (stator protein) and Spa13/SctO (stalk protein). Can form a soluble complex with Spa33/SctQ, MxiN/SctL and MxiK/SctK.

It localises to the cytoplasm. The enzyme catalyses ATP + H2O + cellular proteinSide 1 = ADP + phosphate + cellular proteinSide 2.. Oligomerization increases ATPase activity. Monomeric forms exhibit low-level ATPase activity by forming short-lived oligomers with active site contributions from at least two protomers. In contrast, oligomers exhibit enhanced ATP hydrolysis rates that likely result from multiple preformed active sites within the oligomeric complex. Oligomerization is important for both enzyme activation and T3SS function. Activity is regulated by MxiN/SctL, which differentially regulates the activity of the monomer and the oligomer: it up-regulates the ATPase activity of the monomer, while it down-regulates the activity of the oligomer. ATPase component of the type III secretion system (T3SS), also called injectisome, which is used to inject bacterial effector proteins into eukaryotic host cells. Acts as a molecular motor to provide the energy that is required for the export of proteins. Required for type III secretion apparatus (T3SA) formation, proper protein secretion, host cell invasion and virulence. May play a critical role in T3SS substrate recognition, disassembly of the effector/chaperone complex and unfolding of the effector in an ATP-dependent manner prior to secretion. This is Type 3 secretion system ATPase from Shigella flexneri.